Here is a 326-residue protein sequence, read N- to C-terminus: tRNA-modifying protein YgfZ (326 aa).

The folate site is built by Trp-27 and Trp-189.

It belongs to the tRNA-modifying YgfZ family.

Its subcellular location is the cytoplasm. Its function is as follows. Folate-binding protein involved in regulating the level of ATP-DnaA and in the modification of some tRNAs. It is probably a key factor in regulatory networks that act via tRNA modification, such as initiation of chromosomal replication. The chain is tRNA-modifying protein YgfZ from Escherichia coli O127:H6 (strain E2348/69 / EPEC).